A 213-amino-acid polypeptide reads, in one-letter code: High frequency lysogenization protein HflD homolog (213 aa).

Residues 79–126 adopt a coiled-coil conformation; it reads QGLNAELTRYTLSLMVLERKLSSAKGALDTLGNRINGLQRQLEHFDLQ.

This sequence belongs to the HflD family.

The protein resides in the cytoplasm. The protein localises to the cell inner membrane. This chain is High frequency lysogenization protein HflD homolog, found in Shigella flexneri serotype 5b (strain 8401).